The following is a 146-amino-acid chain: 3-hydroxyacyl-[acyl-carrier-protein] dehydratase FabZ (146 aa).

His49 is a catalytic residue.

This sequence belongs to the thioester dehydratase family. FabZ subfamily.

It localises to the cytoplasm. It catalyses the reaction a (3R)-hydroxyacyl-[ACP] = a (2E)-enoyl-[ACP] + H2O. In terms of biological role, involved in unsaturated fatty acids biosynthesis. Catalyzes the dehydration of short chain beta-hydroxyacyl-ACPs and long chain saturated and unsaturated beta-hydroxyacyl-ACPs. This is 3-hydroxyacyl-[acyl-carrier-protein] dehydratase FabZ from Pseudomonas savastanoi pv. phaseolicola (strain 1448A / Race 6) (Pseudomonas syringae pv. phaseolicola (strain 1448A / Race 6)).